Reading from the N-terminus, the 294-residue chain is ATP synthase gamma chain (294 aa).

Belongs to the ATPase gamma chain family. In terms of assembly, F-type ATPases have 2 components, CF(1) - the catalytic core - and CF(0) - the membrane proton channel. CF(1) has five subunits: alpha(3), beta(3), gamma(1), delta(1), epsilon(1). CF(0) has three main subunits: a, b and c.

Its subcellular location is the cell membrane. Functionally, produces ATP from ADP in the presence of a proton gradient across the membrane. The gamma chain is believed to be important in regulating ATPase activity and the flow of protons through the CF(0) complex. The chain is ATP synthase gamma chain from Opitutus terrae (strain DSM 11246 / JCM 15787 / PB90-1).